The primary structure comprises 338 residues: Holliday junction branch migration complex subunit RuvB (338 aa).

Residues 1-179 (MTDLTTPIRT…FGIPVRLNFY (179 aa)) are large ATPase domain (RuvB-L). ATP contacts are provided by Leu-18, Arg-19, Gly-60, Lys-63, Thr-64, Thr-65, Arg-169, Tyr-179, and Arg-216. Thr-64 is a binding site for Mg(2+). The tract at residues 180–250 (THAELEQVIG…AADAALNRLE (71 aa)) is small ATPAse domain (RuvB-S). The head domain (RuvB-H) stretch occupies residues 253 to 338 (ALGLDAMDRR…AGSQDGLFDK (86 aa)). Residues Arg-289, Arg-308, and Arg-313 each contribute to the DNA site.

This sequence belongs to the RuvB family. Homohexamer. Forms an RuvA(8)-RuvB(12)-Holliday junction (HJ) complex. HJ DNA is sandwiched between 2 RuvA tetramers; dsDNA enters through RuvA and exits via RuvB. An RuvB hexamer assembles on each DNA strand where it exits the tetramer. Each RuvB hexamer is contacted by two RuvA subunits (via domain III) on 2 adjacent RuvB subunits; this complex drives branch migration. In the full resolvosome a probable DNA-RuvA(4)-RuvB(12)-RuvC(2) complex forms which resolves the HJ.

The protein resides in the cytoplasm. The catalysed reaction is ATP + H2O = ADP + phosphate + H(+). Its function is as follows. The RuvA-RuvB-RuvC complex processes Holliday junction (HJ) DNA during genetic recombination and DNA repair, while the RuvA-RuvB complex plays an important role in the rescue of blocked DNA replication forks via replication fork reversal (RFR). RuvA specifically binds to HJ cruciform DNA, conferring on it an open structure. The RuvB hexamer acts as an ATP-dependent pump, pulling dsDNA into and through the RuvAB complex. RuvB forms 2 homohexamers on either side of HJ DNA bound by 1 or 2 RuvA tetramers; 4 subunits per hexamer contact DNA at a time. Coordinated motions by a converter formed by DNA-disengaged RuvB subunits stimulates ATP hydrolysis and nucleotide exchange. Immobilization of the converter enables RuvB to convert the ATP-contained energy into a lever motion, pulling 2 nucleotides of DNA out of the RuvA tetramer per ATP hydrolyzed, thus driving DNA branch migration. The RuvB motors rotate together with the DNA substrate, which together with the progressing nucleotide cycle form the mechanistic basis for DNA recombination by continuous HJ branch migration. Branch migration allows RuvC to scan DNA until it finds its consensus sequence, where it cleaves and resolves cruciform DNA. This is Holliday junction branch migration complex subunit RuvB from Sphingopyxis alaskensis (strain DSM 13593 / LMG 18877 / RB2256) (Sphingomonas alaskensis).